The primary structure comprises 101 residues: Large ribosomal subunit protein uL24 (101 aa).

This sequence belongs to the universal ribosomal protein uL24 family. In terms of assembly, part of the 50S ribosomal subunit.

Its function is as follows. One of two assembly initiator proteins, it binds directly to the 5'-end of the 23S rRNA, where it nucleates assembly of the 50S subunit. Functionally, one of the proteins that surrounds the polypeptide exit tunnel on the outside of the subunit. The sequence is that of Large ribosomal subunit protein uL24 from Borrelia recurrentis (strain A1).